A 267-amino-acid chain; its full sequence is Very long chain fatty acid elongase 6 (267 aa).

N2 carries an N-linked (GlcNAc...) asparagine glycan. 7 helical membrane-spanning segments follow: residues 34–51 (FLFS…RHLM), 70–90 (LAVF…YILM), 111–131 (FWAY…IFII), 136–156 (KLIF…WYSY), 159–179 (MVAG…VMYS), 197–217 (FITL…YLVF), and 234–254 (IFWS…FFFE).

It belongs to the ELO family. ELOVL6 subfamily. In terms of processing, N-Glycosylated. As to expression, highly expressed in adrenal gland, liver, white adipose tissue (WAT), adult and fetal brain, cerebellum, spinal cord, testis, skin and peripheral nerve; where lipogenesis and steroidogenesis are active. Weakly expressed in kidney, heart, skeletal muscle, lung, and spleen.

Its subcellular location is the endoplasmic reticulum membrane. It carries out the reaction a very-long-chain acyl-CoA + malonyl-CoA + H(+) = a very-long-chain 3-oxoacyl-CoA + CO2 + CoA. It catalyses the reaction hexadecanoyl-CoA + malonyl-CoA + H(+) = 3-oxooctadecanoyl-CoA + CO2 + CoA. The catalysed reaction is (9Z)-hexadecenoyl-CoA + malonyl-CoA + H(+) = 3-oxo-(11Z)-octadecenoyl-CoA + CO2 + CoA. The enzyme catalyses dodecanoyl-CoA + malonyl-CoA + H(+) = 3-oxotetradecanoyl-CoA + CO2 + CoA. It carries out the reaction tetradecanoyl-CoA + malonyl-CoA + H(+) = 3-oxohexadecanoyl-CoA + CO2 + CoA. It catalyses the reaction (9Z)-octadecenoyl-CoA + malonyl-CoA + H(+) = 3-oxo-(11Z)-eicosenoyl-CoA + CO2 + CoA. The catalysed reaction is (9Z,12Z)-octadecadienoyl-CoA + malonyl-CoA + H(+) = (11Z,14Z)-3-oxoicosa-11,14-dienoyl-CoA + CO2 + CoA. The enzyme catalyses (9Z,12Z,15Z)-octadecatrienoyl-CoA + malonyl-CoA + H(+) = (11Z,14Z,17Z)-3-oxoeicosatrienoyl-CoA + CO2 + CoA. Its pathway is lipid metabolism; fatty acid biosynthesis. Its activity is regulated as follows. The reaction is stimulated by the presence of HSD17B12, the enzyme catalyzing the second step of the elongation cycle. Its function is as follows. Catalyzes the first and rate-limiting reaction of the four reactions that constitute the long-chain fatty acids elongation cycle. This endoplasmic reticulum-bound enzymatic process allows the addition of 2 carbons to the chain of long- and very long-chain fatty acids (VLCFAs) per cycle. Condensing enzyme that elongates fatty acids with 12, 14 and 16 carbons with higher activity toward C16:0 acyl-CoAs. Catalyzes the synthesis of unsaturated C16 long chain fatty acids and, to a lesser extent, C18:0 and those with low desaturation degree. May participate in the production of saturated and monounsaturated VLCFAs of different chain lengths that are involved in multiple biological processes as precursors of membrane lipids and lipid mediators. This Mus musculus (Mouse) protein is Very long chain fatty acid elongase 6.